Consider the following 176-residue polypeptide: Large ribosomal subunit protein uL6 (176 aa).

Positions 151-170 are enriched in basic and acidic residues; sequence RPPEPYKGKGVRYADEQVRR. The segment at 151-176 is disordered; that stretch reads RPPEPYKGKGVRYADEQVRRKEAKKK.

The protein belongs to the universal ribosomal protein uL6 family. In terms of assembly, part of the 50S ribosomal subunit.

This protein binds to the 23S rRNA, and is important in its secondary structure. It is located near the subunit interface in the base of the L7/L12 stalk, and near the tRNA binding site of the peptidyltransferase center. This Shewanella loihica (strain ATCC BAA-1088 / PV-4) protein is Large ribosomal subunit protein uL6.